Reading from the N-terminus, the 65-residue chain is Large ribosomal subunit protein uL30 (65 aa).

This sequence belongs to the universal ribosomal protein uL30 family. In terms of assembly, part of the 50S ribosomal subunit.

This is Large ribosomal subunit protein uL30 from Desulfosudis oleivorans (strain DSM 6200 / JCM 39069 / Hxd3) (Desulfococcus oleovorans).